Consider the following 425-residue polypeptide: Phosphomethylpyrimidine synthase (425 aa).

Residues methionine 94, tyrosine 123, histidine 162, 184–186 (SRG), 225–228 (NGMR), and glutamate 264 each bind substrate. Residue histidine 268 coordinates Zn(2+). Tyrosine 291 is a substrate binding site. Histidine 332 contacts Zn(2+). 3 residues coordinate [4Fe-4S] cluster: cysteine 407, cysteine 410, and cysteine 414.

Belongs to the ThiC family. The cofactor is [4Fe-4S] cluster.

It carries out the reaction 5-amino-1-(5-phospho-beta-D-ribosyl)imidazole + S-adenosyl-L-methionine = 4-amino-2-methyl-5-(phosphooxymethyl)pyrimidine + CO + 5'-deoxyadenosine + formate + L-methionine + 3 H(+). The protein operates within cofactor biosynthesis; thiamine diphosphate biosynthesis. Functionally, catalyzes the synthesis of the hydroxymethylpyrimidine phosphate (HMP-P) moiety of thiamine from aminoimidazole ribotide (AIR) in a radical S-adenosyl-L-methionine (SAM)-dependent reaction. This Methanoregula boonei (strain DSM 21154 / JCM 14090 / 6A8) protein is Phosphomethylpyrimidine synthase.